We begin with the raw amino-acid sequence, 341 residues long: 3-keto-steroid reductase/17-beta-hydroxysteroid dehydrogenase 7 (341 aa).

Residues 1–229 (MRKVVLITGA…VACPGTALTN (229 aa)) lie on the Extracellular side of the membrane. 8–15 (TGASSGIG) is a binding site for NAD(+). An N-linked (GlcNAc...) asparagine glycan is attached at Asn-37. Residue Ser-171 participates in substrate binding. Residue Asn-178 is glycosylated (N-linked (GlcNAc...) asparagine). Tyr-193 acts as the Proton acceptor in catalysis. Asn-229 carries an N-linked (GlcNAc...) asparagine glycan. Residues 230 to 250 (LTYGILPPFIWTLLMPAILLL) traverse the membrane as a helical segment. The Cytoplasmic portion of the chain corresponds to 251 to 341 (RFFANAFTLT…NQARLSGSCL (91 aa)).

It belongs to the short-chain dehydrogenases/reductases (SDR) family. ERG27 subfamily. Binds to the short form of prolactin receptor. In terms of processing, phosphorylated. As to expression, highly expressed in adrenal gland, liver, lung and thymus. Expressed in breast, ovaries, pituitary gland, pregnant uterus, prostate, kidney, lymph node, small intestine, spinal cord and trachea. Weakly expressed in all other tissues tested. Expressed in eye ciliary epithelial cells and neuroendocrine cells.

It localises to the endoplasmic reticulum membrane. It carries out the reaction 17beta-estradiol + NADP(+) = estrone + NADPH + H(+). It catalyses the reaction a 3beta-hydroxysteroid + NADP(+) = a 3-oxosteroid + NADPH + H(+). The catalysed reaction is 3-dehydro-4alpha-methylzymosterol + NADPH + H(+) = 4alpha-methylzymosterol + NADP(+). The enzyme catalyses zymosterone + NADPH + H(+) = zymosterol + NADP(+). It carries out the reaction 4alpha-methyl-5alpha-cholest-8-en-3-one + NADPH + H(+) = 4alpha-methyl-5alpha-cholest-8-en-3beta-ol + NADP(+). It catalyses the reaction 4alpha-methyl-5alpha-cholest-7-en-3beta-ol + NADP(+) = 4alpha-methyl-5alpha-cholest-7-en-3-one + NADPH + H(+). The catalysed reaction is 5alpha-cholest-8-en-3-one + NADPH + H(+) = 5alpha-cholest-8-en-3beta-ol + NADP(+). The enzyme catalyses 5alpha-androstane-3beta,17beta-diol + NADP(+) = 17beta-hydroxy-5alpha-androstan-3-one + NADPH + H(+). It carries out the reaction progesterone + NADPH + H(+) = 3beta-hydroxypregn-4-ene-20-one + NADP(+). It participates in steroid biosynthesis; estrogen biosynthesis. The protein operates within steroid biosynthesis; zymosterol biosynthesis; zymosterol from lanosterol: step 5/6. Its activity is regulated as follows. Estradiol 17-beta-dehydrogenase and dihydrotestosterone oxidoreductase activities are selectively inhibited by 4-methyl-4-aza-5alpha-androstane derivatives, such as 17beta-[(N-Heptyl)methylamino]-4-aza-5r-androstan-3-one and 17beta-(N-Decylformamido)-4-aza-5r-androstan-3-one. Bifunctional enzyme involved in steroid-hormone metabolism and cholesterol biosynthesis. Catalyzes the NADP(H)-dependent reduction of estrogens and androgens and regulates the biological potency of these steroids. Converts estrone (E1) to a more potent estrogen, 17beta-estradiol (E2). Converts dihydrotestosterone (DHT) to its inactive form 5a-androstane-3b,17b-diol. Converts moderately progesterone to 3beta-hydroxypregn-4-ene-20-one, leading to its inactivation. Additionally, participates in the post-squalene cholesterol biosynthesis, as a 3-ketosteroid reductase. Functionally, does not have enzymatic activities toward E1 and DHT. This is 3-keto-steroid reductase/17-beta-hydroxysteroid dehydrogenase 7 (HSD17B7) from Homo sapiens (Human).